Consider the following 229-residue polypeptide: Putative 3-methyladenine DNA glycosylase (229 aa).

Belongs to the DNA glycosylase MPG family.

The sequence is that of Putative 3-methyladenine DNA glycosylase from Enterococcus faecalis (strain ATCC 700802 / V583).